Consider the following 300-residue polypeptide: Small ribosomal subunit protein uS4m (300 aa).

One can recognise an S4 RNA-binding domain in the interval 146–209 (KRVDMVLLRS…MKRKLLKRLK (64 aa)).

Belongs to the universal ribosomal protein uS4 family.

It localises to the mitochondrion. The chain is Small ribosomal subunit protein uS4m (mrps4) from Dictyostelium discoideum (Social amoeba).